Reading from the N-terminus, the 1352-residue chain is Inhibitor of Bruton tyrosine kinase (1352 aa).

ANK repeat units follow at residues 51-80 (FGRNAGHLASSCGKKGVLDWLIEKGVDLLV) and 85-114 (SGWTALHRSVFYGHIDCVWSLLKHGVSLYM). RCC1 repeat units follow at residues 141–194 (PTEV…FLSQ), 195–246 (KGQV…VLTD), and 248–301 (GCVY…LWTR). Positions 565 to 645 (HDVTFQVGNR…MYTDTCDLLT (81 aa)) constitute a BTB 1 domain. The segment at 692-716 (AHTLSERQKSKPKSSKKGKGVGDDD) is disordered. Positions 701-710 (SKPKSSKKGK) are enriched in basic residues. The BTB 2 domain occupies 769–837 (YDVTMKSVDG…LYTDEAVVIK (69 aa)). The interval 976 to 1002 (FKKAKTRAKKKPRKRSDSSGGYTLSDV) is disordered. The span at 977-989 (KKAKTRAKKKPRK) shows a compositional bias: basic residues. A Phosphoserine modification is found at serine 991. Positions 993–1002 (SSGGYTLSDV) are enriched in polar residues. Serine 1005, serine 1031, serine 1034, serine 1040, serine 1046, serine 1055, serine 1084, serine 1111, serine 1113, and serine 1116 each carry phosphoserine. Residues 1032-1094 (EGSYAGVASP…PTTKSAPQFI (63 aa)) are disordered. The segment covering 1084-1094 (SPTTKSAPQFI) has biased composition (polar residues).

As to quaternary structure, interacts with the PH domain of BTK.

The protein localises to the cytoplasm. Its subcellular location is the membrane. In terms of biological role, acts as an inhibitor of BTK tyrosine kinase activity, thereby playing a role in B-cell development. Down-regulates BTK kinase activity, leading to interference with BTK-mediated calcium mobilization and NF-kappa-B-driven transcription. This is Inhibitor of Bruton tyrosine kinase (Ibtk) from Mus musculus (Mouse).